Consider the following 197-residue polypeptide: GTP cyclohydrolase-2 (197 aa).

Residue R50–E54 participates in GTP binding. The Zn(2+) site is built by C55, C66, and C68. Residues Q71, E93 to R95, and T115 each bind GTP. The active-site Proton acceptor is D127. The Nucleophile role is filled by R129. GTP-binding residues include T150 and K155.

The protein belongs to the GTP cyclohydrolase II family. Zn(2+) is required as a cofactor.

It carries out the reaction GTP + 4 H2O = 2,5-diamino-6-hydroxy-4-(5-phosphoribosylamino)-pyrimidine + formate + 2 phosphate + 3 H(+). It participates in cofactor biosynthesis; riboflavin biosynthesis; 5-amino-6-(D-ribitylamino)uracil from GTP: step 1/4. Functionally, catalyzes the conversion of GTP to 2,5-diamino-6-ribosylamino-4(3H)-pyrimidinone 5'-phosphate (DARP), formate and pyrophosphate. This is GTP cyclohydrolase-2 from Neisseria gonorrhoeae (strain ATCC 700825 / FA 1090).